A 207-amino-acid polypeptide reads, in one-letter code: Uracil phosphoribosyltransferase (207 aa).

Residues R77, R102, and 129–137 (DPMLATGGS) each bind 5-phospho-alpha-D-ribose 1-diphosphate. Uracil contacts are provided by residues I192 and 197–199 (GDA). D198 is a 5-phospho-alpha-D-ribose 1-diphosphate binding site.

It belongs to the UPRTase family. It depends on Mg(2+) as a cofactor.

It carries out the reaction UMP + diphosphate = 5-phospho-alpha-D-ribose 1-diphosphate + uracil. It participates in pyrimidine metabolism; UMP biosynthesis via salvage pathway; UMP from uracil: step 1/1. Allosterically activated by GTP. Functionally, catalyzes the conversion of uracil and 5-phospho-alpha-D-ribose 1-diphosphate (PRPP) to UMP and diphosphate. This Ureaplasma parvum serovar 3 (strain ATCC 27815 / 27 / NCTC 11736) protein is Uracil phosphoribosyltransferase.